Reading from the N-terminus, the 63-residue chain is Large ribosomal subunit protein uL29 (63 aa).

This sequence belongs to the universal ribosomal protein uL29 family.

The sequence is that of Large ribosomal subunit protein uL29 from Ectopseudomonas mendocina (strain ymp) (Pseudomonas mendocina).